The sequence spans 714 residues: Fatty acid oxidation complex subunit alpha (714 aa).

Residues 1–190 (MEMTSAFTLN…KLGLVDDVVP (190 aa)) are enoyl-CoA hydratase. Positions 306-714 (APLNSVGILG…FWKTTATDLQ (409 aa)) are 3-hydroxyacyl-CoA dehydrogenase.

In the N-terminal section; belongs to the enoyl-CoA hydratase/isomerase family. The protein in the central section; belongs to the 3-hydroxyacyl-CoA dehydrogenase family. Heterotetramer of two alpha chains (FadJ) and two beta chains (FadI).

It localises to the cytoplasm. It catalyses the reaction a (3S)-3-hydroxyacyl-CoA = a (2E)-enoyl-CoA + H2O. The enzyme catalyses a 4-saturated-(3S)-3-hydroxyacyl-CoA = a (3E)-enoyl-CoA + H2O. The catalysed reaction is a (3S)-3-hydroxyacyl-CoA + NAD(+) = a 3-oxoacyl-CoA + NADH + H(+). It carries out the reaction (3S)-3-hydroxybutanoyl-CoA = (3R)-3-hydroxybutanoyl-CoA. The protein operates within lipid metabolism; fatty acid beta-oxidation. In terms of biological role, catalyzes the formation of a hydroxyacyl-CoA by addition of water on enoyl-CoA. Also exhibits 3-hydroxyacyl-CoA epimerase and 3-hydroxyacyl-CoA dehydrogenase activities. Strongly involved in the anaerobic degradation of long and medium-chain fatty acids in the presence of nitrate and weakly involved in the aerobic degradation of long-chain fatty acids. The sequence is that of Fatty acid oxidation complex subunit alpha (fadJ) from Escherichia coli (strain K12).